The chain runs to 404 residues: Probable tRNA sulfurtransferase (404 aa).

A THUMP domain is found at 60–165; it reads QPVAESLKQI…EEAAYISYET (106 aa). ATP is bound by residues 183–184, 208–209, Arg-265, Gly-287, and Gln-296; these read ML and HF.

This sequence belongs to the ThiI family.

It localises to the cytoplasm. It catalyses the reaction [ThiI sulfur-carrier protein]-S-sulfanyl-L-cysteine + a uridine in tRNA + 2 reduced [2Fe-2S]-[ferredoxin] + ATP + H(+) = [ThiI sulfur-carrier protein]-L-cysteine + a 4-thiouridine in tRNA + 2 oxidized [2Fe-2S]-[ferredoxin] + AMP + diphosphate. It carries out the reaction [ThiS sulfur-carrier protein]-C-terminal Gly-Gly-AMP + S-sulfanyl-L-cysteinyl-[cysteine desulfurase] + AH2 = [ThiS sulfur-carrier protein]-C-terminal-Gly-aminoethanethioate + L-cysteinyl-[cysteine desulfurase] + A + AMP + 2 H(+). Its pathway is cofactor biosynthesis; thiamine diphosphate biosynthesis. Catalyzes the ATP-dependent transfer of a sulfur to tRNA to produce 4-thiouridine in position 8 of tRNAs, which functions as a near-UV photosensor. Also catalyzes the transfer of sulfur to the sulfur carrier protein ThiS, forming ThiS-thiocarboxylate. This is a step in the synthesis of thiazole, in the thiamine biosynthesis pathway. The sulfur is donated as persulfide by IscS. In Streptococcus sanguinis (strain SK36), this protein is Probable tRNA sulfurtransferase.